We begin with the raw amino-acid sequence, 694 residues long: DNA-binding protein RFX2 (694 aa).

The RFX-type winged-helix DNA-binding region spans 174 to 249; that stretch reads HLQWLLDNYE…YHYYGIRLKP (76 aa). Disordered stretches follow at residues 268-309 and 659-694; these read QPIH…SQHH and DDVS…MQEM. Positions 288 to 299 are enriched in polar residues; it reads NTANSSQHTSPE. Positions 300 to 309 are enriched in low complexity; that stretch reads QSVAAQSQHH.

The protein belongs to the RFX family. As to quaternary structure, homodimer. Heterodimer; heterodimerizes with other rfx proteins.

It localises to the nucleus. It is found in the cytoplasm. In terms of biological role, transcription factor that acts as a key regulator of ciliogenesis. Specifically regulates expression of genes required for cilium assembly and function. Recognizes and binds the X-box, a regulatory motif with DNA sequence 5'-GTNRCC(0-3N)RGYAAC-3' present on promoters. Required for neural tube closure and neural ciliogenesis. This Xenopus tropicalis (Western clawed frog) protein is DNA-binding protein RFX2 (rfx2).